The chain runs to 175 residues: Protein TWIN SISTER of FT (175 aa).

Belongs to the phosphatidylethanolamine-binding protein family.

The protein localises to the cytoplasm. Functionally, may form complexes with phosphorylated ligands by interfering with kinases and their effectors. This Arabidopsis thaliana (Mouse-ear cress) protein is Protein TWIN SISTER of FT (TSF).